Reading from the N-terminus, the 258-residue chain is L-aminoadipate-semialdehyde dehydrogenase-phosphopantetheinyl transferase (258 aa).

This sequence belongs to the P-Pant transferase superfamily. AcpS family.

The enzyme catalyses apo-[ACP] + CoA = holo-[ACP] + adenosine 3',5'-bisphosphate + H(+). Functionally, catalyzes the transfer of a 4'-phosphopantetheine moiety from coenzyme A to a serine residue of acceptor proteins, such as alpha-aminoadipate reductase. Necessary for alpha-aminoadipate reductase activity. The sequence is that of L-aminoadipate-semialdehyde dehydrogenase-phosphopantetheinyl transferase (LYS5) from Candida glabrata (strain ATCC 2001 / BCRC 20586 / JCM 3761 / NBRC 0622 / NRRL Y-65 / CBS 138) (Yeast).